The chain runs to 501 residues: Lysine--tRNA ligase (501 aa).

Mg(2+) is bound by residues aspartate 411 and glutamate 418.

Belongs to the class-II aminoacyl-tRNA synthetase family. In terms of assembly, homodimer. Mg(2+) is required as a cofactor.

It localises to the cytoplasm. The catalysed reaction is tRNA(Lys) + L-lysine + ATP = L-lysyl-tRNA(Lys) + AMP + diphosphate. In Mycolicibacterium gilvum (strain PYR-GCK) (Mycobacterium gilvum (strain PYR-GCK)), this protein is Lysine--tRNA ligase.